The primary structure comprises 411 residues: Putative competence-damage inducible protein (411 aa).

This sequence belongs to the CinA family.

The sequence is that of Putative competence-damage inducible protein from Clostridium acetobutylicum (strain ATCC 824 / DSM 792 / JCM 1419 / IAM 19013 / LMG 5710 / NBRC 13948 / NRRL B-527 / VKM B-1787 / 2291 / W).